A 422-amino-acid chain; its full sequence is Serine protease HTRA2, mitochondrial (422 aa).

Residues 1–17 (MALRGSHRLQVILKRCI) constitute a mitochondrion transit peptide. Positions 18–74 (ASPLFHSHAPNRRSSQPAIKGGEPNSNGNSGHDQQNGERKGKGWRRLVSFFVPFSLG) are excised as a propeptide. Positions 24 to 56 (SHAPNRRSSQPAIKGGEPNSNGNSGHDQQNGER) are disordered. A compositionally biased stretch (polar residues) spans 41 to 51 (PNSNGNSGHDQ). A helical membrane pass occupies residues 64 to 82 (LVSFFVPFSLGAVVSAAVI). Short sequence motifs (IAP-binding) lie at residues 75-78 (AVVS) and 94-97 (SKMT). Residues 139-302 (SNGSGFIIEQ…IPIDYVKVFL (164 aa)) form a serine protease region. Catalysis depends on charge relay system residues H157, D189, and S266. The PDZ domain occupies 325-410 (MGITMLTLTP…NLDIVILRGV (86 aa)).

The protein belongs to the peptidase S1C family. As to quaternary structure, interacts with th/DIAP1 (via BIR 2 domain).

It is found in the mitochondrion intermembrane space. Its subcellular location is the mitochondrion membrane. The enzyme catalyses Cleavage of non-polar aliphatic amino-acids at the P1 position, with a preference for Val, Ile and Met. At the P2 and P3 positions, Arg is selected most strongly with a secondary preference for other hydrophilic residues.. Functionally, serine protease that shows proteolytic activity against a non-specific substrate beta-casein. Promotes or induces cell death either by direct binding to and inhibition of BIRC proteins (also called inhibitor of apoptosis proteins, IAPs), leading to an increase in caspase activity, or by a BIRC inhibition-independent, caspase-independent and serine protease activity-dependent mechanism. Can antagonize antiapoptotic activity of th/Diap1 by directly inducing the degradation of th/Diap1. The chain is Serine protease HTRA2, mitochondrial from Drosophila erecta (Fruit fly).